Consider the following 174-residue polypeptide: Crossover junction endodeoxyribonuclease RuvC (174 aa).

Active-site residues include D8, E67, and D139. D8, E67, and D139 together coordinate Mg(2+).

It belongs to the RuvC family. Homodimer which binds Holliday junction (HJ) DNA. The HJ becomes 2-fold symmetrical on binding to RuvC with unstacked arms; it has a different conformation from HJ DNA in complex with RuvA. In the full resolvosome a probable DNA-RuvA(4)-RuvB(12)-RuvC(2) complex forms which resolves the HJ. The cofactor is Mg(2+).

Its subcellular location is the cytoplasm. It catalyses the reaction Endonucleolytic cleavage at a junction such as a reciprocal single-stranded crossover between two homologous DNA duplexes (Holliday junction).. The RuvA-RuvB-RuvC complex processes Holliday junction (HJ) DNA during genetic recombination and DNA repair. Endonuclease that resolves HJ intermediates. Cleaves cruciform DNA by making single-stranded nicks across the HJ at symmetrical positions within the homologous arms, yielding a 5'-phosphate and a 3'-hydroxyl group; requires a central core of homology in the junction. The consensus cleavage sequence is 5'-(A/T)TT(C/G)-3'. Cleavage occurs on the 3'-side of the TT dinucleotide at the point of strand exchange. HJ branch migration catalyzed by RuvA-RuvB allows RuvC to scan DNA until it finds its consensus sequence, where it cleaves and resolves the cruciform DNA. In Pseudomonas aeruginosa (strain LESB58), this protein is Crossover junction endodeoxyribonuclease RuvC.